The primary structure comprises 432 residues: MGKNVVVLGTQWGDEGKGKVVDLLTERAKYVVRYQGGHNAGHTLVINGEKTVLHLIPSGILRENVVSIIANGVVLAPDALLREMTELEARGVPVRERLLLSEACPLILPYHVALDNAREKARGAKAIGTTGRGIGPAYEDKVARRGLRVGDLFDKASFAVKLKEIMEYHNFQLVNYYHVDAVDYQSVLDEVMAVADLLTSMVVDVADLLNKAYRNGEYVMFEGAQGTLLDIDHGTYPYVTSSNTTAGGVATGSGIGPRCVDYVLGIVKAYSTRVGAGPFPTELFDSVGEFLCEKGNEFGATTGRRRRTGWLDAVAVRRAVELNSLSGFCLTKLDVLDGLDEVKICVGYRLPDGREVDVTPLAAEGWEGIEPIYEVLPGWKESTFGVKLRDGLPQAALNYIKRIEEVTGVPVDIISTGPDREETIVLRHPFDA.

GTP contacts are provided by residues 13–19 and 41–43; these read GDEGKGK and GHT. The active-site Proton acceptor is aspartate 14. Mg(2+)-binding residues include aspartate 14 and glycine 41. Residues 14-17, 39-42, threonine 130, arginine 144, glutamine 225, threonine 240, and arginine 304 contribute to the IMP site; these read DEGK and NAGH. Catalysis depends on histidine 42, which acts as the Proton donor. A substrate-binding site is contributed by 300–306; sequence ATTGRRR. GTP is bound by residues arginine 306, 332-334, and 415-417; these read KLD and STG.

Belongs to the adenylosuccinate synthetase family. Homodimer. Requires Mg(2+) as cofactor.

Its subcellular location is the cytoplasm. The enzyme catalyses IMP + L-aspartate + GTP = N(6)-(1,2-dicarboxyethyl)-AMP + GDP + phosphate + 2 H(+). The protein operates within purine metabolism; AMP biosynthesis via de novo pathway; AMP from IMP: step 1/2. Functionally, plays an important role in the de novo pathway of purine nucleotide biosynthesis. Catalyzes the first committed step in the biosynthesis of AMP from IMP. This is Adenylosuccinate synthetase from Edwardsiella ictaluri (strain 93-146).